A 365-amino-acid polypeptide reads, in one-letter code: Carboxynorspermidine/carboxyspermidine decarboxylase (365 aa).

K37 carries the N6-(pyridoxal phosphate)lysine modification. Substrate contacts are provided by E233 and D269.

Belongs to the Orn/Lys/Arg decarboxylase class-II family. NspC subfamily. As to quaternary structure, homodimer. It depends on pyridoxal 5'-phosphate as a cofactor.

The protein localises to the cytoplasm. The enzyme catalyses carboxynorspermidine + H(+) = norspermidine + CO2. It carries out the reaction carboxyspermidine + H(+) = spermidine + CO2. In terms of biological role, catalyzes the decarboxylation of carboxynorspermidine and carboxyspermidine. This is Carboxynorspermidine/carboxyspermidine decarboxylase from Herminiimonas arsenicoxydans.